A 145-amino-acid polypeptide reads, in one-letter code: Large ribosomal subunit protein uL15 (145 aa).

The span at 1–18 shows a compositional bias: basic and acidic residues; that stretch reads MKLHELKYTEGSKKDVTR. Residues 1-51 form a disordered region; it reads MKLHELKYTEGSKKDVTRVGRGMASGKGKTSTRGHKGQNSRSGGGVRVGFE. A compositionally biased stretch (gly residues) spans 42–51; sequence SGGGVRVGFE.

This sequence belongs to the universal ribosomal protein uL15 family. Part of the 50S ribosomal subunit.

Binds to the 23S rRNA. The polypeptide is Large ribosomal subunit protein uL15 (Mesoplasma florum (strain ATCC 33453 / NBRC 100688 / NCTC 11704 / L1) (Acholeplasma florum)).